The following is a 298-amino-acid chain: Tyrosine recombinase XerC (298 aa).

The Core-binding (CB) domain occupies 2-88 (TDLHTDVERY…ALRSFFDWLV (87 aa)). The Tyr recombinase domain maps to 109 to 288 (HLPKNIDVDD…DFQHLASVYD (180 aa)). Catalysis depends on residues R148, K172, H240, R243, and H266. Y275 functions as the O-(3'-phospho-DNA)-tyrosine intermediate in the catalytic mechanism.

The protein belongs to the 'phage' integrase family. XerC subfamily. As to quaternary structure, forms a cyclic heterotetrameric complex composed of two molecules of XerC and two molecules of XerD, in which XerC interacts with XerD via its C-terminal region, XerD interacts with XerC via its C-terminal region and so on.

It is found in the cytoplasm. With respect to regulation, ftsK may regulate the catalytic switch between XerC and XerD in the heterotetrameric complex during the two steps of the recombination process. In terms of biological role, site-specific tyrosine recombinase, which acts by catalyzing the cutting and rejoining of the recombining DNA molecules. Binds cooperatively to specific DNA consensus sequences that are separated from XerD binding sites by a short central region, forming the heterotetrameric XerC-XerD complex that recombines DNA substrates. The complex is essential to convert dimers of the bacterial chromosome into monomers to permit their segregation at cell division. It also contributes to the segregational stability of plasmids. In the complex XerC specifically exchanges the top DNA strands. The protein is Tyrosine recombinase XerC of Shigella dysenteriae serotype 1 (strain Sd197).